We begin with the raw amino-acid sequence, 238 residues long: Valine-rich protein (238 aa).

The first 16 residues, 1–16 (MQAVLLVVALFGAALA), serve as a signal peptide directing secretion.

Prismatic layer of shell (at protein level). Expressed primarily in the mantle with highest level in the mantle edge and lower level in the mantle pallium.

The protein localises to the secreted. This is Valine-rich protein from Margaritifera margaritifera (Freshwater pearl mussel).